Consider the following 114-residue polypeptide: Large ribosomal subunit protein uL22 (114 aa).

Belongs to the universal ribosomal protein uL22 family. Part of the 50S ribosomal subunit.

Functionally, this protein binds specifically to 23S rRNA; its binding is stimulated by other ribosomal proteins, e.g. L4, L17, and L20. It is important during the early stages of 50S assembly. It makes multiple contacts with different domains of the 23S rRNA in the assembled 50S subunit and ribosome. In terms of biological role, the globular domain of the protein is located near the polypeptide exit tunnel on the outside of the subunit, while an extended beta-hairpin is found that lines the wall of the exit tunnel in the center of the 70S ribosome. The chain is Large ribosomal subunit protein uL22 from Aeromonas hydrophila subsp. hydrophila (strain ATCC 7966 / DSM 30187 / BCRC 13018 / CCUG 14551 / JCM 1027 / KCTC 2358 / NCIMB 9240 / NCTC 8049).